The chain runs to 76 residues: UPF0346 protein LBA0976 (76 aa).

Belongs to the UPF0346 family.

The chain is UPF0346 protein LBA0976 from Lactobacillus acidophilus (strain ATCC 700396 / NCK56 / N2 / NCFM).